We begin with the raw amino-acid sequence, 84 residues long: Large ribosomal subunit protein bL31B (84 aa).

The protein belongs to the bacterial ribosomal protein bL31 family. Type B subfamily. As to quaternary structure, part of the 50S ribosomal subunit.

The polypeptide is Large ribosomal subunit protein bL31B (Rhodococcus opacus (strain B4)).